Consider the following 729-residue polypeptide: Phosphoribosylformylglycinamidine synthase subunit PurL (729 aa).

The active site involves His54. Residues Tyr57 and Lys96 each coordinate ATP. Residue Glu98 participates in Mg(2+) binding. Residues 99–102 (SHNH) and Arg121 contribute to the substrate site. Catalysis depends on His100, which acts as the Proton acceptor. Asp122 lines the Mg(2+) pocket. Position 245 (Gln245) interacts with substrate. Residue Asp273 participates in Mg(2+) binding. 317–319 (ETQ) contacts substrate. The ATP site is built by Asp495 and Gly532. Asn533 contributes to the Mg(2+) binding site. Ser535 lines the substrate pocket.

It belongs to the FGAMS family. In terms of assembly, monomer. Part of the FGAM synthase complex composed of 1 PurL, 1 PurQ and 2 PurS subunits.

It is found in the cytoplasm. The enzyme catalyses N(2)-formyl-N(1)-(5-phospho-beta-D-ribosyl)glycinamide + L-glutamine + ATP + H2O = 2-formamido-N(1)-(5-O-phospho-beta-D-ribosyl)acetamidine + L-glutamate + ADP + phosphate + H(+). The protein operates within purine metabolism; IMP biosynthesis via de novo pathway; 5-amino-1-(5-phospho-D-ribosyl)imidazole from N(2)-formyl-N(1)-(5-phospho-D-ribosyl)glycinamide: step 1/2. Part of the phosphoribosylformylglycinamidine synthase complex involved in the purines biosynthetic pathway. Catalyzes the ATP-dependent conversion of formylglycinamide ribonucleotide (FGAR) and glutamine to yield formylglycinamidine ribonucleotide (FGAM) and glutamate. The FGAM synthase complex is composed of three subunits. PurQ produces an ammonia molecule by converting glutamine to glutamate. PurL transfers the ammonia molecule to FGAR to form FGAM in an ATP-dependent manner. PurS interacts with PurQ and PurL and is thought to assist in the transfer of the ammonia molecule from PurQ to PurL. The protein is Phosphoribosylformylglycinamidine synthase subunit PurL of Staphylococcus aureus (strain Mu3 / ATCC 700698).